We begin with the raw amino-acid sequence, 101 residues long: ATP-dependent Clp protease adapter protein ClpS (101 aa).

This sequence belongs to the ClpS family. Binds to the N-terminal domain of the chaperone ClpA.

Its function is as follows. Involved in the modulation of the specificity of the ClpAP-mediated ATP-dependent protein degradation. The protein is ATP-dependent Clp protease adapter protein ClpS of Clostridium acetobutylicum (strain ATCC 824 / DSM 792 / JCM 1419 / IAM 19013 / LMG 5710 / NBRC 13948 / NRRL B-527 / VKM B-1787 / 2291 / W).